The sequence spans 327 residues: rRNA 2'-O-methyltransferase fibrillarin (327 aa).

Positions 1 to 95 are disordered; that stretch reads MKPGFSPRGG…NQSGKNVMVE (95 aa). Residues 7–80 show a composition bias toward gly residues; that stretch reads PRGGGFGGRG…GGNRGRGGGR (74 aa). R8, R15, R21, R24, R28, and R31 each carry asymmetric dimethylarginine. Glycyl lysine isopeptide (Lys-Gly) (interchain with G-Cter in SUMO2) cross-links involve residues K90, K108, and K115. Position 108 is an N6-acetyllysine (K108). Residue S122 is modified to Phosphoserine. Residue K127 is modified to N6-acetyllysine. Residues S130 and S132 each carry the phosphoserine modification. Residues K137, K149, and K164 each participate in a glycyl lysine isopeptide (Lys-Gly) (interchain with G-Cter in SUMO2) cross-link. Residues 178 to 179 and 197 to 198 each bind S-adenosyl-L-methionine; these read TT and EF. 2 positions are modified to N6-acetyllysine: K211 and K212. S-adenosyl-L-methionine-binding positions include 222 to 223 and 242 to 245; these read DA and DVAQ.

Belongs to the methyltransferase superfamily. Fibrillarin family. Component of box C/D small nucleolar ribonucleoprotein (snoRNP) particles that contain SNU13, FBL, NOP5 and NOP56, plus a guide RNA. It is associated with the U3, U8, U13, X and Y small nuclear RNAs. Component of several ribosomal and nucleolar protein complexes. Part of the small subunit (SSU) processome, composed of more than 70 proteins and the RNA chaperone small nucleolar RNA (snoRNA) U3. Interacts with PRMT5 and UTP20. Interacts with DDX5 and C1QBP. Interacts with NOL11. Interacts with PIH1D1. Interacts with RRP1B. Interacts with NOLC1. Interacts with SDE2. Interacts with NOP2 and NOP56. By homology to other fibrillarins, some or all of the N-terminal domain arginines are modified to asymmetric dimethylarginine (DMA). In terms of processing, ubiquitinated. Ubiquitination leads to proteasomal degradation. Deubiquitinated by USP36. Post-translationally, acetylated by CREBBP/CBP, preventing methylation of 'Gln-105' of histone H2A (H2AQ104me), without affecting rRNA methylation. Deacetylation by SIRT7 restores methylation of 'Gln-105' of histone H2A (H2AQ104me).

It localises to the nucleus. The protein localises to the nucleolus. The protein resides in the nucleoplasm. The catalysed reaction is L-glutaminyl-[histone H2A] + S-adenosyl-L-methionine = N(5)-methyl-L-glutaminyl-[histone H2A] + S-adenosyl-L-homocysteine + H(+). It carries out the reaction a ribonucleotide in rRNA + S-adenosyl-L-methionine = a 2'-O-methylribonucleotide in rRNA + S-adenosyl-L-homocysteine + H(+). The enzyme catalyses a ribonucleotide in U6 snRNA + S-adenosyl-L-methionine = a 2'-O-methylribonucleotide in U6 snRNA + S-adenosyl-L-homocysteine + H(+). In terms of biological role, S-adenosyl-L-methionine-dependent methyltransferase that has the ability to methylate both RNAs and proteins. Involved in pre-rRNA processing by catalyzing the site-specific 2'-hydroxyl methylation of ribose moieties in pre-ribosomal RNA. Site specificity is provided by a guide RNA that base pairs with the substrate. Methylation occurs at a characteristic distance from the sequence involved in base pairing with the guide RNA. Probably catalyzes 2'-O-methylation of U6 snRNAs in box C/D RNP complexes. U6 snRNA 2'-O-methylation is required for mRNA splicing fidelity. Also acts as a protein methyltransferase by mediating methylation of 'Gln-105' of histone H2A (H2AQ104me), a modification that impairs binding of the FACT complex and is specifically present at 35S ribosomal DNA locus. Part of the small subunit (SSU) processome, first precursor of the small eukaryotic ribosomal subunit. During the assembly of the SSU processome in the nucleolus, many ribosome biogenesis factors, an RNA chaperone and ribosomal proteins associate with the nascent pre-rRNA and work in concert to generate RNA folding, modifications, rearrangements and cleavage as well as targeted degradation of pre-ribosomal RNA by the RNA exosome. The polypeptide is rRNA 2'-O-methyltransferase fibrillarin (Mus musculus (Mouse)).